A 446-amino-acid chain; its full sequence is Chromosomal replication initiator protein DnaA (446 aa).

Positions M1–E72 are domain I, interacts with DnaA modulators. The interval E72 to N109 is domain II. The tract at residues M110–S326 is domain III, AAA+ region. Positions 154, 156, 157, and 158 each coordinate ATP. The segment at S327–K446 is domain IV, binds dsDNA.

This sequence belongs to the DnaA family. In terms of assembly, oligomerizes as a right-handed, spiral filament on DNA at oriC.

The protein localises to the cytoplasm. In terms of biological role, plays an essential role in the initiation and regulation of chromosomal replication. ATP-DnaA binds to the origin of replication (oriC) to initiate formation of the DNA replication initiation complex once per cell cycle. Binds the DnaA box (a 9 base pair repeat at the origin) and separates the double-stranded (ds)DNA. Forms a right-handed helical filament on oriC DNA; dsDNA binds to the exterior of the filament while single-stranded (ss)DNA is stabiized in the filament's interior. The ATP-DnaA-oriC complex binds and stabilizes one strand of the AT-rich DNA unwinding element (DUE), permitting loading of DNA polymerase. After initiation quickly degrades to an ADP-DnaA complex that is not apt for DNA replication. Binds acidic phospholipids. In Bacillus pumilus (strain SAFR-032), this protein is Chromosomal replication initiator protein DnaA.